The following is a 131-amino-acid chain: Ribosome-binding factor A (131 aa).

The interval 110–131 (QMNLGEDNEDNEDKENNDPGEE) is disordered. Positions 115–131 (EDNEDNEDKENNDPGEE) are enriched in acidic residues.

It belongs to the RbfA family. Monomer. Binds 30S ribosomal subunits, but not 50S ribosomal subunits or 70S ribosomes.

The protein resides in the cytoplasm. Its function is as follows. One of several proteins that assist in the late maturation steps of the functional core of the 30S ribosomal subunit. Associates with free 30S ribosomal subunits (but not with 30S subunits that are part of 70S ribosomes or polysomes). Required for efficient processing of 16S rRNA. May interact with the 5'-terminal helix region of 16S rRNA. The sequence is that of Ribosome-binding factor A from Natranaerobius thermophilus (strain ATCC BAA-1301 / DSM 18059 / JW/NM-WN-LF).